A 154-amino-acid polypeptide reads, in one-letter code: Putative pre-16S rRNA nuclease (154 aa).

It belongs to the YqgF nuclease family.

It localises to the cytoplasm. Its function is as follows. Could be a nuclease involved in processing of the 5'-end of pre-16S rRNA. The sequence is that of Putative pre-16S rRNA nuclease from Rickettsia bellii (strain OSU 85-389).